Here is a 309-residue protein sequence, read N- to C-terminus: NAD kinase (309 aa).

The active-site Proton acceptor is the Asp89. NAD(+) contacts are provided by residues 89–90 (DG), 163–164 (NE), His174, Arg191, Asp193, and 204–209 (TAYALS).

The protein belongs to the NAD kinase family. A divalent metal cation is required as a cofactor.

The protein localises to the cytoplasm. The catalysed reaction is NAD(+) + ATP = ADP + NADP(+) + H(+). In terms of biological role, involved in the regulation of the intracellular balance of NAD and NADP, and is a key enzyme in the biosynthesis of NADP. Catalyzes specifically the phosphorylation on 2'-hydroxyl of the adenosine moiety of NAD to yield NADP. In Shewanella baltica (strain OS155 / ATCC BAA-1091), this protein is NAD kinase.